Here is a 2313-residue protein sequence, read N- to C-terminus: Serine/threonine-protein kinase smg-1 (2313 aa).

A compositionally biased stretch (basic and acidic residues) spans 779 to 791 (NRKSSDKKPKSTT). The segment at 779 to 798 (NRKSSDKKPKSTTEDVPPPA) is disordered. The region spanning 1045–1528 (ARERLQLVES…VFQVVSGAAS (484 aa)) is the FAT domain. An HEAT repeat occupies 1478–1514 (VHVWKEILPQLFARLSHPSDHIRKTLVDLISRVCTAA). The region spanning 1746-2091 (VADNVTILPT…DTIELFQLRV (346 aa)) is the PI3K/PI4K catalytic domain. Residues 1752-1758 (ILPTKTR) are G-loop. The tract at residues 1954–1962 (GLGDRHLDN) is catalytic loop. The interval 1974–1998 (HIDYNICFDKGKILRIPETVPFRLS) is activation loop. An FATC domain is found at 2281–2313 (RKLSPREEADVLIAEATSSANLAQMYEGWTAWV).

Belongs to the PI3/PI4-kinase family. In terms of assembly, component of a post-splicing multiprotein NMD complex. Mn(2+) serves as cofactor.

It is found in the cytoplasm. It carries out the reaction L-seryl-[protein] + ATP = O-phospho-L-seryl-[protein] + ADP + H(+). The catalysed reaction is L-threonyl-[protein] + ATP = O-phospho-L-threonyl-[protein] + ADP + H(+). Functionally, serine/threonine protein kinase involved in mRNA surveillance. Recognizes the substrate consensus sequence [ST]-Q. Involved in nonsense-mediated decay (NMD) of mRNAs containing premature stop codons by phosphorylating smg-2. The sequence is that of Serine/threonine-protein kinase smg-1 (smg-1) from Caenorhabditis briggsae.